We begin with the raw amino-acid sequence, 320 residues long: MSSCNFTHATFVLIGIPGLEKAHFWVGFPLLSMYVVAMFGNCIVVFIVRTERSLHAPMYLFLCMLAAIDLALSTSTMPKILALFWFDSREISFEACLTQMFFIHALSAIESTILLAMAFDRYVAICHPLRHAAVLNNTVTAQIGIVAVVRGSLFFFPLPLLIKRLAFCHSNVLSHSYCVHQDVMKLAYADTLPNVVYGLTAILLVMGVDVMFISLSYFLIIRTVLQLPSKSERAKAFGTCVSHIGVVLAFYVPLIGLSVVHRFGNSLHPIVRVVMGDIYLLLPPVINPIIYGAKTKQIRTRVLAMFKISCDKDLQAVGGK.

The Extracellular segment spans residues 1–24; sequence MSSCNFTHATFVLIGIPGLEKAHF. The N-linked (GlcNAc...) asparagine glycan is linked to Asn-5. The helical transmembrane segment at 25 to 45 threads the bilayer; it reads WVGFPLLSMYVVAMFGNCIVV. The Cytoplasmic segment spans residues 46–53; the sequence is FIVRTERS. A helical membrane pass occupies residues 54-74; that stretch reads LHAPMYLFLCMLAAIDLALST. Residues 75-98 lie on the Extracellular side of the membrane; it reads STMPKILALFWFDSREISFEACLT. Cys-96 and Cys-178 form a disulfide bridge. Residues 99–119 form a helical membrane-spanning segment; it reads QMFFIHALSAIESTILLAMAF. The Cytoplasmic segment spans residues 120-138; the sequence is DRYVAICHPLRHAAVLNNT. A helical membrane pass occupies residues 139–159; the sequence is VTAQIGIVAVVRGSLFFFPLP. The Extracellular portion of the chain corresponds to 160 to 195; it reads LLIKRLAFCHSNVLSHSYCVHQDVMKLAYADTLPNV. The helical transmembrane segment at 196–216 threads the bilayer; that stretch reads VYGLTAILLVMGVDVMFISLS. The Cytoplasmic portion of the chain corresponds to 217-236; the sequence is YFLIIRTVLQLPSKSERAKA. Residues 237-257 form a helical membrane-spanning segment; it reads FGTCVSHIGVVLAFYVPLIGL. The Extracellular portion of the chain corresponds to 258–272; that stretch reads SVVHRFGNSLHPIVR. The chain crosses the membrane as a helical span at residues 273-293; that stretch reads VVMGDIYLLLPPVINPIIYGA. Residues 294–320 lie on the Cytoplasmic side of the membrane; that stretch reads KTKQIRTRVLAMFKISCDKDLQAVGGK.

The protein belongs to the G-protein coupled receptor 1 family. Highly expressed in the prostate. Also expressed in spleen, liver, olfactory epithelium, retinal pigment epithelium and medulla oblongata. In the retinal pigment epithelium expression is restricted to the pigment cells and choroid (at protein level). Expressed in epidermal melanocytes (at protein level).

The protein resides in the cell membrane. The protein localises to the early endosome membrane. In terms of biological role, olfactory receptor. Activated by the odorant, beta-ionone, a synthetic terpenoid. The activity of this receptor is probably mediated by G-proteins leading to the elevation of intracellular Ca(2+), cAMP and activation of the protein kinases PKA and MAPK3/MAPK1. Stimulation of OR51E2 by beta-ionone affects melanocyte proliferation, differentiation, and melanogenesis. Activation of OR51E2 by beta-ionone increases proliferation and migration of primary retinal pigment epithelial (RPE) cells. Activated also by the short-chain fatty acids (SCFA) acetate and propionate. In response to SCFA, may positively regulate renin secretion and increase blood pressure. May also be activated by steroid hormones and regulate cell proliferation. Activated by L-lactate in glomus cells. The chain is Olfactory receptor 51E2 from Homo sapiens (Human).